A 740-amino-acid chain; its full sequence is Alpha-1,6-mannosylglycoprotein 6-beta-N-acetylglucosaminyltransferase A (740 aa).

Topologically, residues 1–13 are cytoplasmic; it reads MAFFTPWKLSSQK. The helical; Signal-anchor for type II membrane protein transmembrane segment at 14-30 threads the bilayer; it reads LGFFLVTFGFIWGMMLL. Topologically, residues 31-740 are lumenal; it reads HFTIQQRTQP…GQVALCKDCL (710 aa). N-linked (GlcNAc...) asparagine glycosylation is found at Asn109, Asn114, and Asn117. 9 disulfide bridges follow: Cys144-Cys182, Cys155-Cys195, Cys171-Cys337, Cys371-Cys625, Cys648-Cys723, Cys652-Cys725, Cys659-Cys712, Cys680-Cys701, and Cys736-Cys739. The tract at residues 212 to 740 is sufficient for catalytic activity; it reads NSLAEIRTDF…GQVALCKDCL (529 aa). A glycan (N-linked (GlcNAc...) asparagine) is linked at Asn333. 377-378 contributes to the substrate binding site; sequence DS. 2 N-linked (GlcNAc...) asparagine glycosylation sites follow: Asn432 and Asn446. Glu525 provides a ligand contact to UDP-N-acetyl-alpha-D-glucosamine. Lys553 serves as a coordination point for substrate.

This sequence belongs to the glycosyltransferase 18 family. N-glycosylated. In terms of processing, a secreted form is released from the membrane after cleavage by gamma-secretase.

Its subcellular location is the golgi apparatus membrane. It is found in the secreted. It carries out the reaction N(4)-{beta-D-GlcNAc-(1-&gt;2)-[beta-D-GlcNAc-(1-&gt;4)]-alpha-D-Man-(1-&gt;3)-[beta-D-GlcNAc-(1-&gt;2)-alpha-D-Man-(1-&gt;6)]-beta-D-Man-(1-&gt;4)-beta-D-GlcNAc-(1-&gt;4)-beta-D-GlcNAc}-L-asparaginyl-[protein] + UDP-N-acetyl-alpha-D-glucosamine = N(4)-{beta-D-GlcNAc-(1-&gt;2)-[beta-D-GlcNAc-(1-&gt;4)]-alpha-D-Man-(1-&gt;3)-[beta-D-GlcNAc-(1-&gt;2)-[beta-D-GlcNAc-(1-&gt;6)]-alpha-D-Man-(1-&gt;6)]-beta-D-Man-(1-&gt;4)-beta-D-GlcNAc-(1-&gt;4)-beta-D-GlcNAc}-L-asparaginyl-[protein] + UDP + H(+). Its pathway is protein modification; protein glycosylation. In terms of biological role, catalyzes the addition of N-acetylglucosamine (GlcNAc) in beta 1-6 linkage to the alpha-linked mannose of biantennary N-linked oligosaccharides. Catalyzes an important step in the biosynthesis of branched, complex-type N-glycans, such as those found on EGFR, TGFR (TGF-beta receptor) and CDH2. Via its role in the biosynthesis of complex N-glycans, plays an important role in the activation of cellular signaling pathways, reorganization of the actin cytoskeleton, cell-cell adhesion and cell migration. MGAT5-dependent EGFR N-glycosylation enhances the interaction between EGFR and LGALS3 and thereby prevents rapid EGFR endocytosis and prolongs EGFR signaling. Required for efficient interaction between TGFB1 and its receptor. Enhances activation of intracellular signaling pathways by several types of growth factors, including FGF2, PDGF, IGF, TGFB1 and EGF. MGAT5-dependent CDH2 N-glycosylation inhibits CDH2-mediated homotypic cell-cell adhesion and contributes to the regulation of downstream signaling pathways. Promotes cell migration. Contributes to the regulation of the inflammatory response. MGAT5-dependent TCR N-glycosylation enhances the interaction between TCR and LGALS3, limits agonist-induced TCR clustering, and thereby dampens TCR-mediated responses to antigens. Required for normal leukocyte evasation and accumulation at sites of inflammation. Inhibits attachment of monocytes to the vascular endothelium and subsequent monocyte diapedesis. Promotes proliferation of umbilical vein endothelial cells and angiogenesis, at least in part by promoting the release of the growth factor FGF2 from the extracellular matrix. This Cricetulus griseus (Chinese hamster) protein is Alpha-1,6-mannosylglycoprotein 6-beta-N-acetylglucosaminyltransferase A (MGAT5).